A 150-amino-acid polypeptide reads, in one-letter code: Urease accessory protein UreE (150 aa).

This sequence belongs to the UreE family.

Its subcellular location is the cytoplasm. In terms of biological role, involved in urease metallocenter assembly. Binds nickel. Probably functions as a nickel donor during metallocenter assembly. The sequence is that of Urease accessory protein UreE from Streptococcus salivarius (strain 57.I).